The following is a 379-amino-acid chain: CCN family member 1 (379 aa).

The signal sequence occupies residues 1 to 24 (MSSSTIKTLAVAVTLLHLTRLALS). An IGFBP N-terminal domain is found at 25–94 (TCPAACHCPL…TALKGICRAQ (70 aa)). 6 disulfide bridges follow: Cys-26–Cys-50, Cys-30–Cys-52, Cys-32–Cys-53, Cys-39–Cys-56, Cys-64–Cys-78, and Cys-70–Cys-91. One can recognise a VWFC domain in the interval 98 to 164 (RPCEYNSRIY…GQCCEEWVCD (67 aa)). Ser-184 bears the Phosphoserine mark. The region spanning 226–271 (KCIVQTTSWSQCSKSCGTGISTRVTNDNSECRLVKETRICEVRPCG) is the TSP type-1 domain. The segment at 277-313 (SLKKGKKCSKTKKSPEPVRFTYAGCSSVKKYRPKYCG) is heparin-binding. 5 disulfide bridges follow: Cys-284–Cys-321, Cys-301–Cys-335, Cys-312–Cys-351, Cys-315–Cys-353, and Cys-320–Cys-357. Positions 284–358 (CSKTKKSPEP…QSCKCNYNCP (75 aa)) constitute a CTCK domain.

Belongs to the CCN family. As to quaternary structure, interaction with integrins is heparin- and cell-type-dependent and promotes cell adhesion.

It localises to the secreted. Its function is as follows. Promotes cell proliferation, chemotaxis, angiogenesis and cell adhesion. Appears to play a role in wound healing by up-regulating, in skin fibroblasts, the expression of a number of genes involved in angiogenesis, inflammation and matrix remodeling including VEGA-A, VEGA-C, MMP1, MMP3, TIMP1, uPA, PAI-1 and integrins alpha-3 and alpha-5. CCN1-mediated gene regulation is dependent on heparin-binding. Down-regulates the expression of alpha-1 and alpha-2 subunits of collagen type-1. Promotes cell adhesion and adhesive signaling through integrin alpha-6/beta-1, cell migration through integrin alpha-1/beta-5 and cell proliferation through integrin alpha-v/beta-3. This chain is CCN family member 1, found in Rattus norvegicus (Rat).